The sequence spans 195 residues: Calcium channel flower (195 aa).

The next 3 helical transmembrane spans lie at 34 to 54 (LLGIVAAFFAILFGLWNVISI), 66 to 88 (IIQMVAGFVVMLLEAPCCFVCIE), and 117 to 137 (IFMCFGLASLFGSGLIFATGV).

This sequence belongs to the calcium channel flower family. Homomultimer. Associates with the dally/ magu complex.

It localises to the cell membrane. The protein localises to the cytoplasmic vesicle. The protein resides in the secretory vesicle. Its subcellular location is the synaptic vesicle membrane. It is found in the presynaptic cell membrane. It localises to the endosome. Channel activity is inhibited by La(3+), which reduces Ca(2+) influx and thus inhibits it's function in promoting activity-dependent bulk endocytosis (ADBE) in response to high stimuli. Transmembrane protein which mediates synaptic endocytosis, fitness-based cell culling, neuronal culling, morphogen gradient scaling, and calcium transport. Regulates synaptic endocytosis and hence couples exo- with endocytosis. Controls two major modes of synaptic vesicle (SV) endocytosis in the synaptic boutons of neuromuscular junctions (NMJs); Ca(2+) channel-independent Clathrin-mediated endocytosis (CME) in response to mild stimulation, and Ca(2+) channel-dependent activity-dependent bulk endocytosis (ADBE) in response to strong stimulation. Functions in ADBE and subsequent SV reformation from bulk endosomes by initiating Ca(2+) channel-dependent phosphatidylinositol 4,5-bisphosphate (PtdIns(4,5)P2) compartmentalization in synaptic boutons. There it acts at the periactive zone to provide the low Ca(2+) levels required to initiate Calcineurin activation and upregulate PtdIns(4,5)P2. Conversely PtdIns(4,5)P2 enhances fwe Ca(2+) channel-activity, establishing a positive feedback loop that induces PtdIns(4,5)P2 microdomain at the periactive zone. These microdomains trigger bulk membrane invagination (i.e. ADBE) by triggering actin polymerization while also promoting localization of fwe to bulk endosomes, thereby removing the ADBE trigger to reduce endocytosis and prevent excess membrane uptake. PtdIns(4,5)P2 then promotes SV reformation from the bulk endosomes, to coordinate ADBE and subsequent SV reformation. Different combinations of the flower isoforms at the cell membrane are also required for the identification and elimination of suboptimal or supernumerary cells during development, regeneration, and adulthood. Required for the recognition and elimination of unfit cells in the developing wing during cell competition. In the developing pupal retina, mediates the elimination of unwanted postmitotic neurons, including supernumerary photoreceptor neurons that form at the periphery of the retina and are contained within incomplete ommatidia units. Also required for efficient elimination and replacement of old neurons by newly generated neurons during regeneration in the adult brain following mechanical injury. Downstream of the flower fitness fingerprints, cells identified as unwanted or unfit are eliminated via apoptosis through the expression of ahuizotl (azot). However, the cells marked for elimination by the flower isoforms only undergo apoptosis if additional thresholds are met; (1) their neighboring fit/healthy cells express different levels of the fwe isoforms, and (2) the levels of the protective signal SPARC expressed by the loser or unwanted cells are unable to inhibit caspase activation. These additional thresholds for flower-mediated apoptosis, allows useful cells to recover from transient and limited stress before they are unnecessarily eliminated. Functions with dally and magu in a mechanism of scaling, which utilises apoptosis to ensure that the dpp morphogen gradient, which mediates organ growth, remains proportional to the size of the growing wing. In this mechanism, fwe represses dally- and Magu-dependent activity in expanding the gradient, and dally/Magu inhibits fwe-dependent apoptosis to keep cell death rate low. When the levels of these different proteins are optimally regulated the gradient correctly scales with organ growth but when this fails, fwe-mediated apoptosis is activated to trim the developing tissue to match the correct size of the gradient. The polypeptide is Calcium channel flower (Drosophila ananassae (Fruit fly)).